The chain runs to 159 residues: ATP synthase subunit b 2 (159 aa).

The chain crosses the membrane as a helical span at residues 1 to 21 (MDATFWAFIALVIFVAIVVYM).

This sequence belongs to the ATPase B chain family. F-type ATPases have 2 components, F(1) - the catalytic core - and F(0) - the membrane proton channel. F(1) has five subunits: alpha(3), beta(3), gamma(1), delta(1), epsilon(1). F(0) has three main subunits: a(1), b(2) and c(10-14). The alpha and beta chains form an alternating ring which encloses part of the gamma chain. F(1) is attached to F(0) by a central stalk formed by the gamma and epsilon chains, while a peripheral stalk is formed by the delta and b chains.

It localises to the cell inner membrane. Functionally, f(1)F(0) ATP synthase produces ATP from ADP in the presence of a proton or sodium gradient. F-type ATPases consist of two structural domains, F(1) containing the extramembraneous catalytic core and F(0) containing the membrane proton channel, linked together by a central stalk and a peripheral stalk. During catalysis, ATP synthesis in the catalytic domain of F(1) is coupled via a rotary mechanism of the central stalk subunits to proton translocation. Component of the F(0) channel, it forms part of the peripheral stalk, linking F(1) to F(0). This Brucella abortus (strain S19) protein is ATP synthase subunit b 2.